Here is a 648-residue protein sequence, read N- to C-terminus: Putative potassium transport protein DDB_G0292412 (648 aa).

The helical transmembrane segment at 48–68 threads the bilayer; that stretch reads LFLLVILVQLGSTVLLTLPIV. N-linked (GlcNAc...) asparagine glycosylation is present at asparagine 81. Disordered stretches follow at residues 106 to 145 and 223 to 261; these read HDFK…DDND and QQQQ…DSQS. The span at 110–129 shows a compositional bias: acidic residues; the sequence is DDDDENDNNNNEENDDNDDE. A coiled-coil region spans residues 199 to 227; that stretch reads IIQQQQQQQQQQQQQQQQQQQQQQQQQQQ. Asparagine 239, asparagine 243, asparagine 247, asparagine 248, asparagine 254, and asparagine 257 each carry an N-linked (GlcNAc...) asparagine glycan. Helical transmembrane passes span 313 to 333, 353 to 373, 385 to 405, 443 to 463, 472 to 491, and 505 to 525; these read LLVI…ISIG, GWWW…LALF, FLLI…PVFL, VQLF…MALL, NMNY…STRT, and SVLL…IISL. N-linked (GlcNAc...) asparagine glycosylation occurs at asparagine 536. The next 3 helical transmembrane spans lie at 550-570, 571-591, and 592-612; these read IFVP…LLES, GVIT…NVGL, and SISI…MLAG.

The protein belongs to the TrkH potassium transport family.

It is found in the membrane. May function as a potassium transporter. In Dictyostelium discoideum (Social amoeba), this protein is Putative potassium transport protein DDB_G0292412.